The following is a 365-amino-acid chain: Sulfotransferase 2B1 (365 aa).

70–75 (KSGTTW) contributes to the 3'-phosphoadenylyl sulfate binding site. Substrate contacts are provided by Trp98, Trp103, and His125. The Proton acceptor role is filled by His125. Residues Arg147, Ser155, Tyr210, 244 to 249 (STFSAM), and 274 to 276 (RKG) each bind 3'-phosphoadenylyl sulfate. The segment at 303–365 (GMPTFPWDED…ASETPHPRPS (63 aa)) is disordered. A compositionally biased stretch (acidic residues) spans 309-325 (WDEDPEEDGSPDPEPSP). Phosphoserine is present on Ser348.

This sequence belongs to the sulfotransferase 1 family. In terms of processing, phosphorylated. In terms of tissue distribution, expressed in the stratum granulosum-stratum corneum junction in the skin (at protein level). Expressed highly in placenta, prostate and trachea and lower expression in the small intestine and lung.

The protein localises to the cytoplasm. Its subcellular location is the cytosol. The protein resides in the microsome. It is found in the nucleus. It carries out the reaction an alcohol + 3'-phosphoadenylyl sulfate = an alkyl sulfate + adenosine 3',5'-bisphosphate + H(+). The enzyme catalyses 3beta-hydroxyandrost-5-en-17-one + 3'-phosphoadenylyl sulfate = dehydroepiandrosterone 3-sulfate + adenosine 3',5'-bisphosphate + H(+). It catalyses the reaction (24S)-hydroxycholesterol + 3'-phosphoadenylyl sulfate = (24S)-hydroxycholesterol 3-sulfate + adenosine 3',5'-bisphosphate + H(+). The catalysed reaction is cholesterol + 3'-phosphoadenylyl sulfate = cholesterol sulfate + adenosine 3',5'-bisphosphate + H(+). It carries out the reaction pregnenolone + 3'-phosphoadenylyl sulfate = pregnenolone sulfate + adenosine 3',5'-bisphosphate + H(+). Sulfotransferase that utilizes 3'-phospho-5'-adenylyl sulfate (PAPS) as sulfonate donor to catalyze the sulfate conjugation. Responsible for the sulfation of cholesterol. Catalyzes sulfation of the 3beta-hydroxyl groups of steroids, such as, pregnenolone and dehydroepiandrosterone (DHEA). Preferentially sulfonates cholesterol, while it also has significant activity with pregnenolone and DHEA. Plays a role in epidermal cholesterol metabolism and in the regulation of epidermal proliferation and differentiation. Functionally, sulfonates pregnenolone but not cholesterol. The protein is Sulfotransferase 2B1 (SULT2B1) of Homo sapiens (Human).